A 598-amino-acid chain; its full sequence is Elongation factor 4 (598 aa).

Residues 2-184 form the tr-type G domain; sequence KNIRNFSIIA…EIVAKIPAPE (183 aa). GTP-binding positions include 14-19 and 131-134; these read DHGKST and NKID.

This sequence belongs to the TRAFAC class translation factor GTPase superfamily. Classic translation factor GTPase family. LepA subfamily.

The protein resides in the cell inner membrane. It carries out the reaction GTP + H2O = GDP + phosphate + H(+). Required for accurate and efficient protein synthesis under certain stress conditions. May act as a fidelity factor of the translation reaction, by catalyzing a one-codon backward translocation of tRNAs on improperly translocated ribosomes. Back-translocation proceeds from a post-translocation (POST) complex to a pre-translocation (PRE) complex, thus giving elongation factor G a second chance to translocate the tRNAs correctly. Binds to ribosomes in a GTP-dependent manner. This is Elongation factor 4 from Haemophilus influenzae (strain 86-028NP).